The following is a 219-amino-acid chain: Ribose-5-phosphate isomerase A (219 aa).

Residues 28-31 (SGST), 81-84 (DGAD), and 94-97 (KGGG) each bind substrate. The Proton acceptor role is filled by Glu-103. Lys-121 is a substrate binding site.

Belongs to the ribose 5-phosphate isomerase family. Homodimer.

It carries out the reaction aldehydo-D-ribose 5-phosphate = D-ribulose 5-phosphate. Its pathway is carbohydrate degradation; pentose phosphate pathway; D-ribose 5-phosphate from D-ribulose 5-phosphate (non-oxidative stage): step 1/1. Its function is as follows. Catalyzes the reversible conversion of ribose-5-phosphate to ribulose 5-phosphate. The protein is Ribose-5-phosphate isomerase A of Actinobacillus pleuropneumoniae serotype 3 (strain JL03).